The chain runs to 131 residues: Small ribosomal subunit protein uS8 (131 aa).

Belongs to the universal ribosomal protein uS8 family. As to quaternary structure, part of the 30S ribosomal subunit. Contacts proteins S5 and S12.

In terms of biological role, one of the primary rRNA binding proteins, it binds directly to 16S rRNA central domain where it helps coordinate assembly of the platform of the 30S subunit. This Hydrogenovibrio crunogenus (strain DSM 25203 / XCL-2) (Thiomicrospira crunogena) protein is Small ribosomal subunit protein uS8.